A 374-amino-acid polypeptide reads, in one-letter code: Probable tRNA pseudouridine synthase D (374 aa).

D81 (nucleophile) is an active-site residue. The 200-residue stretch at V141–L340 folds into the TRUD domain.

This sequence belongs to the pseudouridine synthase TruD family.

It catalyses the reaction uridine(13) in tRNA = pseudouridine(13) in tRNA. In terms of biological role, could be responsible for synthesis of pseudouridine from uracil-13 in transfer RNAs. The polypeptide is Probable tRNA pseudouridine synthase D (Nanoarchaeum equitans (strain Kin4-M)).